Reading from the N-terminus, the 470-residue chain is Putative multidrug resistance protein MdtD (470 aa).

The Periplasmic segment spans residues 1–11 (MTELPDNTRWQ). The chain crosses the membrane as a helical span at residues 12–32 (LWIVALGFFMQSLDTTIVNTA). Topologically, residues 33–48 (LPSMAKSLGESPLHMH) are cytoplasmic. The helical transmembrane segment at 49-69 (MVVVSYVLTVAVMLPASGWLA) threads the bilayer. Over 70-76 (DKIGVRN) the chain is Periplasmic. A helical membrane pass occupies residues 77–97 (IFFAAIVLFTLGSLFCALSGT). The Cytoplasmic portion of the chain corresponds to 98–101 (LNQL). The chain crosses the membrane as a helical span at residues 102-124 (VLARVLQGVGGAMMVPVGRLTVM). Topologically, residues 125 to 137 (KIVPRAQYMAAMT) are periplasmic. Residues 138–158 (FVTLPGQIGPLLGPALGGVLV) form a helical membrane-spanning segment. Topologically, residues 159 to 164 (EYASWH) are cytoplasmic. The helical transmembrane segment at 165 to 185 (WIFLINIPVGIVGAMATFMLM) threads the bilayer. The Periplasmic segment spans residues 186–196 (PNYTIETRRFD). Residues 197 to 217 (LPGFLLLAIGMAVLTLALDGS) traverse the membrane as a helical segment. Topologically, residues 218-221 (KSMG) are cytoplasmic. A helical membrane pass occupies residues 222 to 242 (ISPWTLAGLAAGGAAAILLYL). Residues 243-262 (LHAKKNSGALFSLRLFCTPT) lie on the Periplasmic side of the membrane. The helical transmembrane segment at 263-283 (FSLGLLGSFAGRIGSGMLPFM) threads the bilayer. At 284-285 (TP) the chain is on the cytoplasmic side. A helical transmembrane segment spans residues 286–306 (VFLQIGLGFSPFHAGLMMIPM). At 307–341 (VLGSMGMKRIVVQIVNRFGYRRVLVATTLGLALVS) the chain is on the periplasmic side. The chain crosses the membrane as a helical span at residues 342–362 (LLFMSVALLGWYYLLPLVLLL). The Cytoplasmic segment spans residues 363–395 (QGMVNSARFSSMNTLTLKDLPDTLASSGNSLLS). Residues 396-416 (MIMQLSMSIGVTIAGMLLGMF) traverse the membrane as a helical segment. At 417-430 (GQQHIGIDSSATHH) the chain is on the periplasmic side. A helical membrane pass occupies residues 431-451 (VFMYTWLCMAVIIALPAIIFA). Over 452 to 470 (RVPNDTQQNMVISRRKRSL) the chain is Cytoplasmic.

This sequence belongs to the major facilitator superfamily. TCR/Tet family.

It localises to the cell inner membrane. In Salmonella paratyphi B (strain ATCC BAA-1250 / SPB7), this protein is Putative multidrug resistance protein MdtD.